The following is an 891-amino-acid chain: Schlafen family member 5 (891 aa).

Residue lysine 59 forms a Glycyl lysine isopeptide (Lys-Gly) (interchain with G-Cter in SUMO2) linkage. 578 to 585 contributes to the ATP binding site; the sequence is GLPGSGKT.

Belongs to the Schlafen family. Subgroup III subfamily.

Functionally, may have a role in hematopoietic cell differentiation. The polypeptide is Schlafen family member 5 (SLFN5) (Homo sapiens (Human)).